Consider the following 209-residue polypeptide: Uracil phosphoribosyltransferase (209 aa).

5-phospho-alpha-D-ribose 1-diphosphate is bound by residues arginine 79, arginine 104, and 131 to 139; that span reads DPMLATGGS. Uracil contacts are provided by residues isoleucine 194 and 199–201; that span reads GDA. Residue aspartate 200 participates in 5-phospho-alpha-D-ribose 1-diphosphate binding.

Belongs to the UPRTase family. It depends on Mg(2+) as a cofactor.

The enzyme catalyses UMP + diphosphate = 5-phospho-alpha-D-ribose 1-diphosphate + uracil. It functions in the pathway pyrimidine metabolism; UMP biosynthesis via salvage pathway; UMP from uracil: step 1/1. Its activity is regulated as follows. Allosterically activated by GTP. In terms of biological role, catalyzes the conversion of uracil and 5-phospho-alpha-D-ribose 1-diphosphate (PRPP) to UMP and diphosphate. This Lachnoclostridium phytofermentans (strain ATCC 700394 / DSM 18823 / ISDg) (Clostridium phytofermentans) protein is Uracil phosphoribosyltransferase.